Here is a 128-residue protein sequence, read N- to C-terminus: Small ribosomal subunit protein uS9 (128 aa).

The protein belongs to the universal ribosomal protein uS9 family.

The chain is Small ribosomal subunit protein uS9 from Christiangramia forsetii (strain DSM 17595 / CGMCC 1.15422 / KT0803) (Gramella forsetii).